The chain runs to 339 residues: Heat-inducible transcription repressor HrcA (339 aa).

The protein belongs to the HrcA family.

Functionally, negative regulator of class I heat shock genes (grpE-dnaK-dnaJ and groELS operons). Prevents heat-shock induction of these operons. This Paraburkholderia phymatum (strain DSM 17167 / CIP 108236 / LMG 21445 / STM815) (Burkholderia phymatum) protein is Heat-inducible transcription repressor HrcA.